The chain runs to 664 residues: Prelamin-A/C (664 aa).

At methionine 1 the chain carries N-acetylmethionine. A disordered region spans residues 1–24; that stretch reads METPSQRRATRSGAQASSTPLSPT. Positions 1–33 are head; that stretch reads METPSQRRATRSGAQASSTPLSPTRITRLQEKE. Residues 1–130 form an interaction with MLIP region; the sequence is METPSQRRAT…TKKEGDLMAA (130 aa). Threonine 3 bears the Phosphothreonine mark. Position 5 is a phosphoserine (serine 5). The residue at position 10 (threonine 10) is a Phosphothreonine. Residues serine 12 and serine 18 each carry the phosphoserine modification. At threonine 19 the chain carries Phosphothreonine. Serine 22 is subject to Phosphoserine. One can recognise an IF rod domain in the interval 31 to 387; the sequence is EKEDLQELND…KLLEGEEERL (357 aa). Lysine 32 is subject to N6-acetyllysine; alternate. Lysine 32 is subject to N6-succinyllysine; alternate. Lysine 32 participates in a covalent cross-link: Glycyl lysine isopeptide (Lys-Gly) (interchain with G-Cter in SUMO2); alternate. A coil 1A region spans residues 34–70; sequence DLQELNDRLAVYIDRVRSLETENAGLRLRITESEEVV. A phosphoserine mark is found at serine 51, serine 66, and serine 71. The tract at residues 71–80 is linker 1; it reads SREVSGIKSA. N6-acetyllysine occurs at positions 78 and 97. The interval 81 to 218 is coil 1B; it reads YEAELGDARK…NIYSEELRET (138 aa). Residue lysine 97 forms a Glycyl lysine isopeptide (Lys-Gly) (interchain with G-Cter in SUMO2) linkage. At serine 107 the chain carries Phosphoserine. N6-acetyllysine occurs at positions 108, 114, 123, 135, 144, and 155. Lysine 171 bears the N6-acetyllysine; alternate mark. The residue at position 171 (lysine 171) is an N6-succinyllysine; alternate. Lysine 171 is covalently cross-linked (Glycyl lysine isopeptide (Lys-Gly) (interchain with G-Cter in SUMO2); alternate). N6-acetyllysine is present on residues lysine 180, lysine 201, and lysine 208. A Glycyl lysine isopeptide (Lys-Gly) (interchain with G-Cter in SUMO2); alternate cross-link involves residue lysine 201. Residue lysine 201 forms a Glycyl lysine isopeptide (Lys-Gly) (interchain with G-Cter in SUMO); alternate linkage. Lysine 208 participates in a covalent cross-link: Glycyl lysine isopeptide (Lys-Gly) (interchain with G-Cter in SUMO2). At serine 212 the chain carries Phosphoserine. Glycyl lysine isopeptide (Lys-Gly) (interchain with G-Cter in SUMO2) cross-links involve residues lysine 219 and lysine 233. The segment at 219–242 is linker 2; the sequence is KRRHETRLVEIDNGKQREFESRLA. An N6-acetyllysine mark is found at lysine 233, lysine 260, lysine 265, and lysine 270. The segment at 243-383 is coil 2; that stretch reads DALQDLRAQH…HAYRKLLEGE (141 aa). Residue lysine 260 forms a Glycyl lysine isopeptide (Lys-Gly) (interchain with G-Cter in SUMO2); alternate linkage. A Glycyl lysine isopeptide (Lys-Gly) (interchain with G-Cter in SUMO2); alternate cross-link involves residue lysine 270. Residues serine 277, serine 282, serine 301, and serine 307 each carry the phosphoserine modification. Lysine 311 is covalently cross-linked (Glycyl lysine isopeptide (Lys-Gly) (interchain with G-Cter in SUMO2); alternate). Residues lysine 311, lysine 316, and lysine 341 each carry the N6-acetyllysine modification. Residues lysine 366 and lysine 378 each participate in a glycyl lysine isopeptide (Lys-Gly) (interchain with G-Cter in SUMO2) cross-link. Positions 384–442 are disordered; it reads EERLRLSPSPTSQRSRGRASSHSSQTQSGGSVTKKRKLESSESRSSFSQHARTSGRVAV. A tail region spans residues 384–664; sequence EERLRLSPSP…TQSPQNCSIM (281 aa). Phosphoserine occurs at positions 390, 392, 395, 398, 403, 404, 406, 407, and 414. Residues 403 to 414 are compositionally biased toward low complexity; sequence SSHSSQTQSGGS. Threonine 416 carries the phosphothreonine modification. Position 417 is an N6-acetyllysine (lysine 417). Glycyl lysine isopeptide (Lys-Gly) (interchain with G-Cter in SUMO2) cross-links involve residues lysine 417 and lysine 420. The short motif at 417-422 is the Nuclear localization signal element; sequence KKRKLE. Phosphoserine is present on residues serine 423, serine 426, serine 429, and serine 431. An LTD domain is found at 428 to 545; the sequence is SSFSQHARTS…EEVAMRKLVR (118 aa). Residue lysine 450 forms a Glycyl lysine isopeptide (Lys-Gly) (interchain with G-Cter in SUMO2); alternate linkage. Lysine 450 and lysine 457 each carry N6-acetyllysine. Residues serine 458 and serine 463 each carry the phosphoserine modification. Glycyl lysine isopeptide (Lys-Gly) (interchain with G-Cter in SUMO2) cross-links involve residues lysine 470 and lysine 486. An N6-acetyllysine modification is found at lysine 486. Phosphothreonine occurs at positions 496 and 505. Serine 533 and serine 546 each carry phosphoserine. Threonine 548 carries the post-translational modification Phosphothreonine. Positions 555–577 are disordered; it reads DEDGDDLLHHHHGSHGSSSGDPA. Phosphoserine occurs at positions 568 and 571. Lysine 597 participates in a covalent cross-link: Glycyl lysine isopeptide (Lys-Gly) (interchain with G-Cter in SUMO2); alternate. Lysine 597 is covalently cross-linked (Glycyl lysine isopeptide (Lys-Gly) (interchain with G-Cter in SUMO1); alternate). The tract at residues 598-620 is disordered; that stretch reads ASASSSGAQVGGSISSGSSASSV. 4 positions are modified to phosphoserine: serine 612, serine 613, serine 616, and serine 619. O-linked (GlcNAc) serine glycosylation is found at serine 625 and serine 628. Serine 628, serine 632, and serine 636 each carry phosphoserine. A propeptide spans 647–661 (removed in Lamin-A/C form); sequence LLGNSRPRTQSPQNC. The residue at position 661 (cysteine 661) is a Cysteine methyl ester. Cysteine 661 is lipidated: S-farnesyl cysteine. The propeptide at 662-664 is removed in Prelamin-A/C form and in Lamin-A/C form; that stretch reads SIM.

This sequence belongs to the intermediate filament family. Homodimer of lamin A and lamin C. Lamin dimers then assemble into dimeric head-to-tail polymers. Ultimately, two head-to-tail polymers assemble laterally into a protofilament with a uniformly shaped rod of 3.5 nm in diameter. Interacts with lamin-associated polypeptides IA, IB and TMPO-alpha, RB1 and with emerin. Interacts with SREBF1, SREBF2, SUN2 and TMEM43. Interacts with TMEM201. Proteolytically processed isoform A interacts with NARF. Interacts with SUN1. Interacts with MLIP. Interacts with DMPK; may regulate nuclear envelope stability. Interacts with SUV39H1; the interaction increases stability of SUV39H1. Interacts with SYNE2. Interacts with ITSN1 isoform 2. Interacts with IFFO1; enables the formation of an interior nucleoskeleton that is recruited to DNA double-strand breaks. As to quaternary structure, interacts with EMD. In terms of assembly, interacts (via C-terminus) with LEMD2 (via N-terminus) (in vitro). In terms of processing, proteolytic cleavage of the C-terminal of 18 residues of prelamin-A/C results in the production of lamin-A/C. The prelamin-A/C maturation pathway includes farnesylation of CAAX motif by protein farnesyltransferase (FNTA and FNTB), removal of the last three amino acids (-AAX) by RCE1/FACE2 and/or ZMPSTE24, methylation of the C-terminal cysteine by ICMT and endoproteolytic removal of the last 15 C-terminal amino acids by ZMPSTE24. Proteolytic cleavage requires prior farnesylation and methylation, and absence of these blocks cleavage. Post-translationally, farnesylation of prelamin-A/C facilitates nuclear envelope targeting. Phosphorylation plays a key role in lamin organization, subcellular localization and nuclear envelope disintegration. Phosphorylation by CDK1 at Ser-22 and Ser-392 at the onset of mitosis drives lamin disassembly and nuclear envelope breakdown. Phosphorylation at Ser-22 and Ser-392 during interphase promotes localization to the nucleoplasm and regulates lamina assembly. Phosphorylation at Ser-22, Ser-392 and Ser-628 during interphase causes redistribution between the nucleus and the cytoplasm. Phosphorylation at Ser-22 by CDK1 regulates matrix stiffness. Phosphorylation status of Ser-22 determines its localization between double-strand break (DSB) sites and the nuclear matrix. Phosphorylated by ATR at Ser-282 in response to DNA damage, leading to lamin disassembly and nuclear envelope rupture. Phosphorylation also regulates stability in micronuclei arising from genome instability: phosphorylation at Ser-395 by ATR in response to genome instability and double-stranded DNA breaks primes LMNA for subsequent phosphorylation at Ser-392 by CDK1 and micronuclei envelope rupture. The rupture of micronuclear envelope triggers the cGAS-STING pathway thereby activating the type I interferon response and innate immunity. In terms of processing, acetylation by KAT8 is required for nuclear architecture. Post-translationally, sumoylation is necessary for the localization to the nuclear envelope.

Its subcellular location is the nucleus lamina. The protein resides in the nucleus envelope. It localises to the nucleus. The protein localises to the nucleoplasm. It is found in the nucleus matrix. In terms of biological role, lamins are intermediate filament proteins that assemble into a filamentous meshwork, and which constitute the major components of the nuclear lamina, a fibrous layer on the nucleoplasmic side of the inner nuclear membrane. Lamins provide a framework for the nuclear envelope, bridging the nuclear envelope and chromatin, thereby playing an important role in nuclear assembly, chromatin organization, nuclear membrane and telomere dynamics. Lamin A and C also regulate matrix stiffness by conferring nuclear mechanical properties. The structural integrity of the lamina is strictly controlled by the cell cycle, as seen by the disintegration and formation of the nuclear envelope in prophase and telophase, respectively. Lamin A and C are present in equal amounts in the lamina of mammals. Also invoved in DNA repair: recruited by DNA repair proteins XRCC4 and IFFO1 to the DNA double-strand breaks (DSBs) to prevent chromosome translocation by immobilizing broken DNA ends. Required for normal development of peripheral nervous system and skeletal muscle and for muscle satellite cell proliferation. Required for osteoblastogenesis and bone formation. Also prevents fat infiltration of muscle and bone marrow, helping to maintain the volume and strength of skeletal muscle and bone. Required for cardiac homeostasis. Functionally, prelamin-A/C can accelerate smooth muscle cell senescence. It acts to disrupt mitosis and induce DNA damage in vascular smooth muscle cells (VSMCs), leading to mitotic failure, genomic instability, and premature senescence. This is Prelamin-A/C (LMNA) from Sus scrofa (Pig).